The sequence spans 207 residues: Cytochrome c biogenesis ATP-binding export protein CcmA (207 aa).

The ABC transporter domain maps to 6–207; it reads LCAEGLECIR…RGDCRSLNLS (202 aa). 38-45 lines the ATP pocket; that stretch reads GANGAGKT.

The protein belongs to the ABC transporter superfamily. CcmA exporter (TC 3.A.1.107) family. As to quaternary structure, the complex is composed of two ATP-binding proteins (CcmA) and two transmembrane proteins (CcmB).

It localises to the cell inner membrane. The catalysed reaction is heme b(in) + ATP + H2O = heme b(out) + ADP + phosphate + H(+). In terms of biological role, part of the ABC transporter complex CcmAB involved in the biogenesis of c-type cytochromes; once thought to export heme, this seems not to be the case, but its exact role is uncertain. Responsible for energy coupling to the transport system. The chain is Cytochrome c biogenesis ATP-binding export protein CcmA from Methylococcus capsulatus (strain ATCC 33009 / NCIMB 11132 / Bath).